We begin with the raw amino-acid sequence, 122 residues long: Acidic phospholipase A2 5 (122 aa).

Disulfide bonds link C26–C115, C28–C44, C43–C95, C49–C122, C50–C88, C57–C81, and C75–C86. The Ca(2+) site is built by F27, G29, and G31. H47 is an active-site residue. D48 is a binding site for Ca(2+). D89 is a catalytic residue.

Belongs to the phospholipase A2 family. Group II subfamily. D49 sub-subfamily. Monomer (predominant). Non-covalently linked homodimers are also observed. Ca(2+) serves as cofactor. In terms of tissue distribution, expressed by the venom gland.

Its subcellular location is the secreted. The enzyme catalyses a 1,2-diacyl-sn-glycero-3-phosphocholine + H2O = a 1-acyl-sn-glycero-3-phosphocholine + a fatty acid + H(+). Preincubation with heparin slightly increase the enzymatic activity. In terms of biological role, snake venom phospholipase A2 (PLA2) that inhibits platelet aggregation induced by ADP, arachidonic acid and PAF. Acts in a enzymatic independent manner on a proteinase-activated receptor (PAR1, F2R) to evoke calcium release through the inositol 1,4,5-trisphosphate receptor (ITPR1, IP3R) and induces mouse aorta contraction. PAR1, phospholipase C and IP3R inhibitors suppress PA2-induced aorta contraction. PLA2 catalyzes the calcium-dependent hydrolysis of the 2-acyl groups in 3-sn-phosphoglycerides. This is Acidic phospholipase A2 5 from Trimeresurus stejnegeri (Chinese green tree viper).